A 190-amino-acid polypeptide reads, in one-letter code: Guanylate kinase (190 aa).

In terms of domain architecture, Guanylate kinase-like spans 8–186; the sequence is ARPTVLTGPS…ALAELEKQMN (179 aa). Position 15 to 22 (15 to 22) interacts with ATP; sequence GPSGVGKG.

This sequence belongs to the guanylate kinase family.

It localises to the cytoplasm. The enzyme catalyses GMP + ATP = GDP + ADP. The catalysed reaction is dZMP + ATP = dZDP + ADP. It functions in the pathway purine metabolism. Functionally, essential for recycling GMP and indirectly, cGMP. Its function is as follows. (Microbial infection) Catalyzes the phosphorylation of dZMP to dZDP, when the bacterium is infected by a phage that produces the substrate for the synthesis of dZTP (2- amino-2'-deoxyadenosine 5'-triphosphate), which is then used by the phage as a DNA polymerase substrate. This is Guanylate kinase from Synechococcus sp. (strain CC9311).